A 212-amino-acid polypeptide reads, in one-letter code: Transcriptional regulator GfcR (212 aa).

The protein belongs to the purine/pyrimidine phosphoribosyltransferase family. GfcR subfamily.

In terms of biological role, DNA-binding transcriptional regulator that functions as a regulator of central sugar catabolic pathways. This is Transcriptional regulator GfcR from Halobacterium salinarum (strain ATCC 29341 / DSM 671 / R1).